Reading from the N-terminus, the 369-residue chain is Anthranilate phosphoribosyltransferase (369 aa).

5-phospho-alpha-D-ribose 1-diphosphate contacts are provided by residues G111, 114–115 (GD), T119, 121–124 (NIST), 139–147 (KHGNRGVSS), and S151. Residue G111 participates in anthranilate binding. S123 is a Mg(2+) binding site. N142 lines the anthranilate pocket. R197 serves as a coordination point for anthranilate. The Mg(2+) site is built by D256 and E257.

The protein belongs to the anthranilate phosphoribosyltransferase family. In terms of assembly, homodimer. Mg(2+) is required as a cofactor.

The catalysed reaction is N-(5-phospho-beta-D-ribosyl)anthranilate + diphosphate = 5-phospho-alpha-D-ribose 1-diphosphate + anthranilate. It functions in the pathway amino-acid biosynthesis; L-tryptophan biosynthesis; L-tryptophan from chorismate: step 2/5. Its function is as follows. Catalyzes the transfer of the phosphoribosyl group of 5-phosphorylribose-1-pyrophosphate (PRPP) to anthranilate to yield N-(5'-phosphoribosyl)-anthranilate (PRA). This Cupriavidus pinatubonensis (strain JMP 134 / LMG 1197) (Cupriavidus necator (strain JMP 134)) protein is Anthranilate phosphoribosyltransferase.